Reading from the N-terminus, the 577-residue chain is E3 ubiquitin-protein ligase MSL2 (577 aa).

The interval 1-116 is sufficient for interaction with MSL1; the sequence is MNPVNATALY…CEYITQTTLA (116 aa). Positions 44, 47, 62, 64, 67, 70, 81, and 84 each coordinate Zn(2+). The segment at 44–85 adopts an RING-type zinc-finger fold; that stretch reads CCVCGHLLQDPIAPTNSTCQHYVCKTCKGKKMMMKPSCSWCK. Lys-375 is covalently cross-linked (Glycyl lysine isopeptide (Lys-Gly) (interchain with G-Cter in SUMO2)). The interval 405–427 is disordered; that stretch reads TKSMKKSHEHGSKKSHSKTKPGI. Positions 407–423 are enriched in basic residues; the sequence is SMKKSHEHGSKKSHSKT. The residue at position 447 (Ser-447) is a Phosphoserine. The region spanning 457-508 is the CXC MSL2-type domain; sequence QEKKGCKCGRATQNPSVLTCRGQRCPCYSNRKACLDCICRGCQNSYMANGEK. Zn(2+) contacts are provided by Cys-462, Cys-464, Cys-476, Cys-481, Cys-483, Cys-490, Cys-493, Cys-495, and Cys-498.

Belongs to the MSL2 family. In terms of assembly, component of a multisubunit histone acetyltransferase complex (MSL) at least composed of the KAT8/MOF/MYST1, MSL1/hampin, MSL2 and MSL3. Forms a MSL heterotetrameric core with MSL1.

It is found in the nucleus. The protein localises to the chromosome. The enzyme catalyses S-ubiquitinyl-[E2 ubiquitin-conjugating enzyme]-L-cysteine + [acceptor protein]-L-lysine = [E2 ubiquitin-conjugating enzyme]-L-cysteine + N(6)-ubiquitinyl-[acceptor protein]-L-lysine.. The protein operates within protein modification; protein ubiquitination. Functionally, non-catalytic component of the MSL histone acetyltransferase complex, a multiprotein complex that mediates the majority of histone H4 acetylation at 'Lys-16' (H4K16ac), an epigenetic mark that prevents chromatin compaction. The MSL complex is required for chromosome stability and genome integrity by maintaining homeostatic levels of H4K16ac. The MSL complex is also involved in gene dosage by promoting up-regulation of genes expressed by the X chromosome. X up-regulation is required to compensate for autosomal biallelic expression. The MSL complex also participates in gene dosage compensation by promoting expression of Tsix non-coding RNA. MSL2 plays a key role in gene dosage by ensuring biallelic expression of a subset of dosage-sensitive genes, including many haploinsufficient genes. Acts by promoting promoter-enhancer contacts, thereby preventing DNA methylation of one allele and creating a methylation-free environment for methylation-sensitive transcription factors such as SP1, KANSL1 and KANSL3. Also acts as an E3 ubiquitin ligase that promotes monoubiquitination of histone H2B at 'Lys-35' (H2BK34Ub), but not that of H2A. This activity is greatly enhanced by heterodimerization with MSL1. H2B ubiquitination in turn stimulates histone H3 methylation at 'Lys-4' (H3K4me) and 'Lys-79' (H3K79me) and leads to gene activation, including that of HOXA9 and MEIS1. Also involved in the DNA damage response by mediating ubiquitination of TP53/p53 and TP53BP1. In Homo sapiens (Human), this protein is E3 ubiquitin-protein ligase MSL2.